A 143-amino-acid polypeptide reads, in one-letter code: Alpha-S2-casein-like B (143 aa).

Residues 1-15 (MKFIILTCLLAVALA) form the signal peptide.

The protein belongs to the alpha-casein family. In terms of tissue distribution, mammary gland specific. Secreted in milk.

Its subcellular location is the secreted. Functionally, important role in the capacity of milk to transport calcium phosphate. The polypeptide is Alpha-S2-casein-like B (Csn1s2b) (Mus musculus (Mouse)).